We begin with the raw amino-acid sequence, 483 residues long: NADH-quinone oxidoreductase subunit N (483 aa).

A run of 14 helical transmembrane segments spans residues 8–28, 45–65, 78–98, 106–126, 131–151, 166–186, 206–226, 241–261, 275–295, 303–323, 330–350, 373–393, 399–419, and 452–472; these read INLA…GLLL, IAAG…GATQ, FAAF…VVSW, LGNG…MFMI, FLVL…LAAY, FVLG…IYGV, MLGI…KIAA, PTSV…AALF, WGPI…LAGL, LLAY…AVGN, VLVY…LILV, LALL…LAGF, IFMA…VLFS, and AIVG…GSLM.

This sequence belongs to the complex I subunit 2 family. In terms of assembly, NDH-1 is composed of 14 different subunits. Subunits NuoA, H, J, K, L, M, N constitute the membrane sector of the complex.

The protein localises to the cell inner membrane. The catalysed reaction is a quinone + NADH + 5 H(+)(in) = a quinol + NAD(+) + 4 H(+)(out). NDH-1 shuttles electrons from NADH, via FMN and iron-sulfur (Fe-S) centers, to quinones in the respiratory chain. The immediate electron acceptor for the enzyme in this species is believed to be ubiquinone. Couples the redox reaction to proton translocation (for every two electrons transferred, four hydrogen ions are translocated across the cytoplasmic membrane), and thus conserves the redox energy in a proton gradient. This chain is NADH-quinone oxidoreductase subunit N, found in Magnetococcus marinus (strain ATCC BAA-1437 / JCM 17883 / MC-1).